Here is a 199-residue protein sequence, read N- to C-terminus: Protein GrpE (199 aa).

Positions 1–10 are enriched in basic and acidic residues; sequence MTNQTEKEQV. Residues 1 to 44 form a disordered region; the sequence is MTNQTEKEQVEQDVSQATELAQEAQEAQTQDVEPELQQNNEIDP. The segment covering 16 to 30 has biased composition (low complexity); sequence QATELAQEAQEAQTQ.

This sequence belongs to the GrpE family. In terms of assembly, homodimer.

Its subcellular location is the cytoplasm. In terms of biological role, participates actively in the response to hyperosmotic and heat shock by preventing the aggregation of stress-denatured proteins, in association with DnaK and GrpE. It is the nucleotide exchange factor for DnaK and may function as a thermosensor. Unfolded proteins bind initially to DnaJ; upon interaction with the DnaJ-bound protein, DnaK hydrolyzes its bound ATP, resulting in the formation of a stable complex. GrpE releases ADP from DnaK; ATP binding to DnaK triggers the release of the substrate protein, thus completing the reaction cycle. Several rounds of ATP-dependent interactions between DnaJ, DnaK and GrpE are required for fully efficient folding. The chain is Protein GrpE from Glaesserella parasuis serovar 5 (strain SH0165) (Haemophilus parasuis).